The sequence spans 1349 residues: MIWYVATFIASVIGTRGLAAEGAHGLREEPEFVTARAGESVVLRCDVIHPVTGQPPPYVVEWFKFGVPIPIFIKFGYYPPHVDPEYAGRASLHDKASLRLEQVRSEDQGWYECKVLMLDQQYDTFHNGSWVHLTINAPPTFTETPPQYIEAKEGGSITMTCTAFGNPKPIVTWLKEGTLLGASGKYQVSDGSLTVTSVSREDRGAYTCRAYSIQGEAVHTTHLLVQGPPFIVSPPENITVNISQDALLTCRAEAYPGNLTYTWYWQDENVYFQNDLKLRVRILIDGTLIIFRVKPEDSGKYTCVPSNSLGRSPSASAYLTVQYPARVLNMPPVIYVPVGIHGYIRCPVDAEPPATVVKWNKDGRPLQVEKNLGWTLMEDGSIRIEEATEEALGTYTCVPYNTLGTMGQSAPARLVLKDPPYFTVLPGWEYRQEAGRELLIPCAAAGDPFPVITWRKVGKPSRSKHSALPSGSLQFRALSKEDHGEWECVATNVVTSITASTHLTVIGTSPHAPGSVRVQVSMTTANVSWEPGYDGGYEQTFSVWMKRAQFGPHDWLSLPVPPGPSWLLVDTLEPETAYQFSVLAQNKLGTSAFSEVVTVNTLAFPITTPEPLVLVTPPRCLIANRTQQGVLLSWLPPANHSFPIDRYIMEFRVAERWELLDDGIPGTEGEFFAKDLSQDTWYEFRVLAVMQDLISEPSNIAGVSSTDIFPQPDLTEDGLARPVLAGIVATICFLAAAILFSTLAACFVNKQRKRKLKRKKDPPLSITHCRKSLESPLSSGKVSPESIRTLRAPSESSDDQGQPAAKRMLSPTREKELSLYKKTKRAISSKKYSVAKAEAEAEATTPIELISRGPDGRFVMDPAEMEPSLKSRRIEGFPFAEETDMYPEFRQSDEENEDPLVPTSVAALKSQLTPLSSSQESYLPPPAYSPRFQPRGLEGPGGLEGRLQATGQARPPAPRPFHHGQYYGYLSSSSPGEVEPPPFYVPEVGSPLSSVMSSPPLPTEGPFGHPTIPEENGENASNSTLPLTQTPTGGRSPEPWGRPEFPFGGLETPAMMFPHQLPPCDVPESLQPKAGLPRGLPPTSLQVPAAYPGILSLEAPKGWAGKSPGRGPVPAPPAAKWQDRPMQPLVSQGQLRHTSQGMGIPVLPYPEPAEPGAHGGPSTFGLDTRWYEPQPRPRPSPRQARRAEPSLHQVVLQPSRLSPLTQSPLSSRTGSPELAARARPRPGLLQQAEMSEITLQPPAAVSFSRKSTPSTGSPSQSSRSGSPSYRPAMGFTTLATGYPSPPPGPAPAGPGDSLDVFGQTPSPRRTGEELLRPETPPPTLPTSGKLQRDRPAPATSPPERALSKL.

The first 20 residues, 1-20 (MIWYVATFIASVIGTRGLAA), serve as a signal peptide directing secretion. At 21–722 (EGAHGLREEP…DLTEDGLARP (702 aa)) the chain is on the extracellular side. Ig-like domains are found at residues 24-129 (HGLR…HNGS), 139-226 (PTFT…LLVQ), 228-320 (PPFI…AYLT), 324-415 (PARV…ARLV), and 420-504 (PYFT…THLT). Intrachain disulfides connect C45/C113 and C161/C208. N-linked (GlcNAc...) asparagine glycosylation is found at N241 and N258. Cystine bridges form between C250/C303, C346/C397, and C442/C488. Fibronectin type-III domains follow at residues 512–604 (APGS…TLAF) and 614–708 (LVTP…STDI). Residue N624 is glycosylated (N-linked (GlcNAc...) asparagine). Residues 723-743 (VLAGIVATICFLAAAILFSTL) traverse the membrane as a helical segment. The Cytoplasmic portion of the chain corresponds to 744-1349 (AACFVNKQRK…SPPERALSKL (606 aa)). Disordered stretches follow at residues 758–817 (RKKD…EKEL), 911–1081 (QLTP…RGLP), and 1099–1349 (APKG…LSKL). Residues S775, S783, and S794 each carry the phosphoserine modification. Over residues 911–921 (QLTPLSSSQES) the composition is skewed to polar residues. Low complexity predominate over residues 985–998 (VPEVGSPLSSVMSS). Composition is skewed to polar residues over residues 1018 to 1033 (ENAS…TPTG), 1129 to 1141 (LVSQ…TSQG), and 1199 to 1214 (SRLS…SRTG). R1136 is modified (omega-N-methylarginine). S1207 and S1215 each carry phosphoserine. The span at 1251–1271 (STPSTGSPSQSSRSGSPSYRP) shows a compositional bias: low complexity. Positions 1283 to 1292 (PSPPPGPAPA) are enriched in pro residues.

Belongs to the immunoglobulin superfamily. Turtle family. Found in a complex with MAGI2 and NLGN2, where it interacts with MAGI2 (via PDZ 5 and PDZ 6 domains). In terms of processing, N-glycosylated and sialylated. Not significantly O-glycosylated.

The protein resides in the postsynaptic cell membrane. The protein localises to the postsynaptic density. Functionally, transmembrane protein which is abundantly expressed in interneurons, where it may regulate inhibitory synapse development. May mediate homophilic cell adhesion. This is Protein turtle homolog B (IGSF9B) from Homo sapiens (Human).